The chain runs to 172 residues: Large ribosomal subunit protein uL10 (172 aa).

This sequence belongs to the universal ribosomal protein uL10 family. As to quaternary structure, part of the ribosomal stalk of the 50S ribosomal subunit. The N-terminus interacts with L11 and the large rRNA to form the base of the stalk. The C-terminus forms an elongated spine to which L12 dimers bind in a sequential fashion forming a multimeric L10(L12)X complex.

Forms part of the ribosomal stalk, playing a central role in the interaction of the ribosome with GTP-bound translation factors. The sequence is that of Large ribosomal subunit protein uL10 from Rhodopseudomonas palustris (strain HaA2).